We begin with the raw amino-acid sequence, 293 residues long: Protease HtpX homolog (293 aa).

2 helical membrane-spanning segments follow: residues isoleucine 5–leucine 25 and alanine 43–serine 63. Histidine 148 provides a ligand contact to Zn(2+). Glutamate 149 is an active-site residue. Residue histidine 152 coordinates Zn(2+). The next 2 membrane-spanning stretches (helical) occupy residues valine 159–isoleucine 179 and phenylalanine 199–tryptophan 219. Glutamate 225 is a binding site for Zn(2+).

The protein belongs to the peptidase M48B family. The cofactor is Zn(2+).

The protein resides in the cell inner membrane. This Nitrosomonas europaea (strain ATCC 19718 / CIP 103999 / KCTC 2705 / NBRC 14298) protein is Protease HtpX homolog.